Consider the following 188-residue polypeptide: Protein-arginine kinase activator protein (188 aa).

4 consecutive short sequence motifs (CXXC metal binding motif) follow at residues 3-6 (CENC), 29-32 (CQTC), 87-90 (CPSC), and 105-108 (CANC). The region spanning 145-180 (KRKIEEKNEYLKKLIEIQDFEEAAIVRDEIKALKAE) is the UVR domain.

In terms of assembly, interacts with McsB and CtsR; the CXXC motifs are needed for the binding.

In terms of biological role, activates the phosphorylation activity of the protein-arginine kinase McsB. May function as an important molecule for oxidative tolerance in various types of stress including that of heavy metals. Binds to Cu(2+), Zn(2+), Co(2+) and Cd(2+) via its CXXC metal binding motifs. This is Protein-arginine kinase activator protein from Staphylococcus aureus (strain NCTC 8325 / PS 47).